Consider the following 122-residue polypeptide: Large ribosomal subunit protein uL14 (122 aa).

This sequence belongs to the universal ribosomal protein uL14 family. Part of the 50S ribosomal subunit. Forms a cluster with proteins L3 and L19. In the 70S ribosome, L14 and L19 interact and together make contacts with the 16S rRNA in bridges B5 and B8.

Binds to 23S rRNA. Forms part of two intersubunit bridges in the 70S ribosome. This chain is Large ribosomal subunit protein uL14, found in Rhodococcus erythropolis (strain PR4 / NBRC 100887).